We begin with the raw amino-acid sequence, 495 residues long: UDP-N-acetylmuramoyl-L-alanyl-D-glutamate--2,6-diaminopimelate ligase (495 aa).

Residues L27, S29, and 44–46 each bind UDP-N-acetyl-alpha-D-muramoyl-L-alanyl-D-glutamate; that span reads HQT. 116 to 122 provides a ligand contact to ATP; that stretch reads GTNGKTT. Residues N157, 158–159, S185, Q191, and R193 each bind UDP-N-acetyl-alpha-D-muramoyl-L-alanyl-D-glutamate; that span reads TT. N6-carboxylysine is present on K225. Residues R390, 414–417, G465, and E469 contribute to the meso-2,6-diaminopimelate site; that span reads DNPR. The Meso-diaminopimelate recognition motif signature appears at 414–417; the sequence is DNPR.

Belongs to the MurCDEF family. MurE subfamily. Requires Mg(2+) as cofactor. In terms of processing, carboxylation is probably crucial for Mg(2+) binding and, consequently, for the gamma-phosphate positioning of ATP.

Its subcellular location is the cytoplasm. The catalysed reaction is UDP-N-acetyl-alpha-D-muramoyl-L-alanyl-D-glutamate + meso-2,6-diaminopimelate + ATP = UDP-N-acetyl-alpha-D-muramoyl-L-alanyl-gamma-D-glutamyl-meso-2,6-diaminopimelate + ADP + phosphate + H(+). The protein operates within cell wall biogenesis; peptidoglycan biosynthesis. Catalyzes the addition of meso-diaminopimelic acid to the nucleotide precursor UDP-N-acetylmuramoyl-L-alanyl-D-glutamate (UMAG) in the biosynthesis of bacterial cell-wall peptidoglycan. The sequence is that of UDP-N-acetylmuramoyl-L-alanyl-D-glutamate--2,6-diaminopimelate ligase from Sodalis glossinidius (strain morsitans).